Reading from the N-terminus, the 204-residue chain is Proteasome subunit beta type-3 (204 aa).

This sequence belongs to the peptidase T1B family. As to quaternary structure, the 26S proteasome consists of a 20S proteasome core and two 19S regulatory subunits. The 20S proteasome core is composed of 28 subunits that are arranged in four stacked rings, resulting in a barrel-shaped structure. The two end rings are each formed by seven alpha subunits, and the two central rings are each formed by seven beta subunits. The catalytic chamber with the active sites is on the inside of the barrel.

The protein resides in the cytoplasm. The protein localises to the nucleus. Its function is as follows. Non-catalytic component of the proteasome, a multicatalytic proteinase complex which is characterized by its ability to cleave peptides with Arg, Phe, Tyr, Leu, and Glu adjacent to the leaving group at neutral or slightly basic pH. The proteasome has an ATP-dependent proteolytic activity. The protein is Proteasome subunit beta type-3 (pbs-3) of Caenorhabditis elegans.